The primary structure comprises 425 residues: Serine--tRNA ligase (425 aa).

Residue Thr-230 to Glu-232 participates in L-serine binding. Arg-261–Glu-263 is a binding site for ATP. Glu-284 is an L-serine binding site. ATP is bound at residue Glu-348–Ser-351. Ser-383 contributes to the L-serine binding site.

It belongs to the class-II aminoacyl-tRNA synthetase family. Type-1 seryl-tRNA synthetase subfamily. As to quaternary structure, homodimer. The tRNA molecule binds across the dimer.

It localises to the cytoplasm. The enzyme catalyses tRNA(Ser) + L-serine + ATP = L-seryl-tRNA(Ser) + AMP + diphosphate + H(+). It carries out the reaction tRNA(Sec) + L-serine + ATP = L-seryl-tRNA(Sec) + AMP + diphosphate + H(+). It participates in aminoacyl-tRNA biosynthesis; selenocysteinyl-tRNA(Sec) biosynthesis; L-seryl-tRNA(Sec) from L-serine and tRNA(Sec): step 1/1. Its function is as follows. Catalyzes the attachment of serine to tRNA(Ser). Is also able to aminoacylate tRNA(Sec) with serine, to form the misacylated tRNA L-seryl-tRNA(Sec), which will be further converted into selenocysteinyl-tRNA(Sec). This chain is Serine--tRNA ligase, found in Ligilactobacillus salivarius (strain UCC118) (Lactobacillus salivarius).